The chain runs to 336 residues: Phenylalanine--tRNA ligase alpha subunit (336 aa).

Glu251 contributes to the Mg(2+) binding site.

This sequence belongs to the class-II aminoacyl-tRNA synthetase family. Phe-tRNA synthetase alpha subunit type 1 subfamily. Tetramer of two alpha and two beta subunits. Requires Mg(2+) as cofactor.

It is found in the cytoplasm. The enzyme catalyses tRNA(Phe) + L-phenylalanine + ATP = L-phenylalanyl-tRNA(Phe) + AMP + diphosphate + H(+). The protein is Phenylalanine--tRNA ligase alpha subunit of Syntrophobacter fumaroxidans (strain DSM 10017 / MPOB).